A 376-amino-acid chain; its full sequence is Carbamoyl phosphate synthase small chain (376 aa).

Positions 1–184 (MKAILALADG…SEGYQQQTGE (184 aa)) are CPSase. Residues serine 45, glycine 236, and glycine 238 each contribute to the L-glutamine site. The Glutamine amidotransferase type-1 domain occupies 188–374 (KVVAYDFGIK…ADLMEKNRQS (187 aa)). Cysteine 263 serves as the catalytic Nucleophile. The L-glutamine site is built by leucine 264, glutamine 267, asparagine 305, glycine 307, and phenylalanine 308. Active-site residues include histidine 347 and glutamate 349.

Belongs to the CarA family. As to quaternary structure, composed of two chains; the small (or glutamine) chain promotes the hydrolysis of glutamine to ammonia, which is used by the large (or ammonia) chain to synthesize carbamoyl phosphate. Tetramer of heterodimers (alpha,beta)4.

It carries out the reaction hydrogencarbonate + L-glutamine + 2 ATP + H2O = carbamoyl phosphate + L-glutamate + 2 ADP + phosphate + 2 H(+). It catalyses the reaction L-glutamine + H2O = L-glutamate + NH4(+). Its pathway is amino-acid biosynthesis; L-arginine biosynthesis; carbamoyl phosphate from bicarbonate: step 1/1. The protein operates within pyrimidine metabolism; UMP biosynthesis via de novo pathway; (S)-dihydroorotate from bicarbonate: step 1/3. Small subunit of the glutamine-dependent carbamoyl phosphate synthetase (CPSase). CPSase catalyzes the formation of carbamoyl phosphate from the ammonia moiety of glutamine, carbonate, and phosphate donated by ATP, constituting the first step of 2 biosynthetic pathways, one leading to arginine and/or urea and the other to pyrimidine nucleotides. The small subunit (glutamine amidotransferase) binds and cleaves glutamine to supply the large subunit with the substrate ammonia. This chain is Carbamoyl phosphate synthase small chain, found in Syntrophotalea carbinolica (strain DSM 2380 / NBRC 103641 / GraBd1) (Pelobacter carbinolicus).